A 116-amino-acid polypeptide reads, in one-letter code: Large ribosomal subunit protein uL18 (116 aa).

This sequence belongs to the universal ribosomal protein uL18 family. Part of the 50S ribosomal subunit; part of the 5S rRNA/L5/L18/L25 subcomplex. Contacts the 5S and 23S rRNAs.

Its function is as follows. This is one of the proteins that bind and probably mediate the attachment of the 5S RNA into the large ribosomal subunit, where it forms part of the central protuberance. The protein is Large ribosomal subunit protein uL18 of Acinetobacter baumannii (strain AB307-0294).